The chain runs to 299 residues: Sulfate adenylyltransferase subunit 2 (299 aa).

Belongs to the PAPS reductase family. CysD subfamily. Sulfate-activating enzymes, NodP and NodQ, may be physically associated.

It catalyses the reaction sulfate + ATP + H(+) = adenosine 5'-phosphosulfate + diphosphate. In terms of biological role, proposed to provide activated sulfate for transfer to nod factor. In Rhizobium meliloti (strain 1021) (Ensifer meliloti), this protein is Sulfate adenylyltransferase subunit 2 (nodP).